A 160-amino-acid chain; its full sequence is MHILKKPDFSDPKLRAKLAKGMGHNYYGEPAWPNDLLYIFPVVILGTFACLVGLAVLDPAMLGDKADPFATPLEILPEWYLYPVFQILRVVPNKLLGIALQTLVPLGLMLIPFIESVNKYQNPFRRPIAMAFFLFGTVITIYLGIGACLPIDKSLTLGLF.

3 consecutive transmembrane segments (helical) span residues 36–56, 95–115, and 128–148; these read LLYIFPVVILGTFACLVGLAV, LLGIALQTLVPLGLMLIPFIE, and IAMAFFLFGTVITIYLGIGAC.

The protein belongs to the cytochrome b family. PetD subfamily. As to quaternary structure, the 4 large subunits of the cytochrome b6-f complex are cytochrome b6, subunit IV (17 kDa polypeptide, PetD), cytochrome f and the Rieske protein, while the 4 small subunits are PetG, PetL, PetM and PetN. The complex functions as a dimer.

The protein resides in the cellular thylakoid membrane. Component of the cytochrome b6-f complex, which mediates electron transfer between photosystem II (PSII) and photosystem I (PSI), cyclic electron flow around PSI, and state transitions. This is Cytochrome b6-f complex subunit 4 from Prochlorococcus marinus (strain MIT 9313).